The following is a 506-amino-acid chain: Glutamate--tRNA ligase (506 aa).

Residues 24 to 34 (PSPTGLQHIGG) carry the 'HIGH' region motif. Zn(2+) contacts are provided by C121, C123, C148, and H150. The short motif at 266-270 (KLSKR) is the 'KMSKS' region element. K269 is a binding site for ATP.

This sequence belongs to the class-I aminoacyl-tRNA synthetase family. Glutamate--tRNA ligase type 1 subfamily. Monomer. The cofactor is Zn(2+).

The protein resides in the cytoplasm. The catalysed reaction is tRNA(Glu) + L-glutamate + ATP = L-glutamyl-tRNA(Glu) + AMP + diphosphate. Its function is as follows. Catalyzes the attachment of glutamate to tRNA(Glu) in a two-step reaction: glutamate is first activated by ATP to form Glu-AMP and then transferred to the acceptor end of tRNA(Glu). This chain is Glutamate--tRNA ligase, found in Borrelia duttonii (strain Ly).